A 157-amino-acid polypeptide reads, in one-letter code: MFDILMYLFENYVHSEVEFLVDEDELTQELTRAGFHQSEIIKALSWLENLAELQEGDTPYLCDHDQHSFRIYTQKEMDKLDVECRGFLLFLEQIKVLSVETREMVIDRVMELDETALILEDLKWVVLMVLFNAPGNESAYEQMEDLIFEQPDGRLHS.

It belongs to the Smg family.

This is Protein Smg homolog from Shewanella sediminis (strain HAW-EB3).